A 276-amino-acid chain; its full sequence is Large ribosomal subunit protein uL2 (276 aa).

A disordered region spans residues 224–276; it reads VAMNPVDHPHGGGEGKTGEGRVPVSPWGTPTKGYRTRRNKRTTSMIVQRRQKR. Over residues 230-242 the composition is skewed to basic and acidic residues; sequence DHPHGGGEGKTGE.

The protein belongs to the universal ribosomal protein uL2 family. As to quaternary structure, part of the 50S ribosomal subunit. Forms a bridge to the 30S subunit in the 70S ribosome.

In terms of biological role, one of the primary rRNA binding proteins. Required for association of the 30S and 50S subunits to form the 70S ribosome, for tRNA binding and peptide bond formation. It has been suggested to have peptidyltransferase activity; this is somewhat controversial. Makes several contacts with the 16S rRNA in the 70S ribosome. The protein is Large ribosomal subunit protein uL2 of Polynucleobacter asymbioticus (strain DSM 18221 / CIP 109841 / QLW-P1DMWA-1) (Polynucleobacter necessarius subsp. asymbioticus).